A 568-amino-acid polypeptide reads, in one-letter code: Cytochrome P450 monooxygenase 41 (568 aa).

The helical transmembrane segment at 21-41 (LTSLVPLILSVMVCLIATVTI) threads the bilayer. N-linked (GlcNAc...) asparagine glycans are attached at residues asparagine 321 and asparagine 377. Cysteine 514 provides a ligand contact to heme.

Belongs to the cytochrome P450 family. The cofactor is heme.

It is found in the membrane. It functions in the pathway secondary metabolite biosynthesis. Its function is as follows. Cytochrome P450 monooxygenase that is able to use 3,5-dimethoxy-trans-stilbene and 3,5,4'-trimethoxy-trans-stilbene as substrates for oxidation. In Postia placenta (strain ATCC 44394 / Madison 698-R) (Brown rot fungus), this protein is Cytochrome P450 monooxygenase 41.